The following is a 619-amino-acid chain: Chaperone protein HscA homolog (619 aa).

It belongs to the heat shock protein 70 family.

In terms of biological role, chaperone involved in the maturation of iron-sulfur cluster-containing proteins. Has a low intrinsic ATPase activity which is markedly stimulated by HscB. This chain is Chaperone protein HscA homolog, found in Methylococcus capsulatus (strain ATCC 33009 / NCIMB 11132 / Bath).